Consider the following 108-residue polypeptide: Large ribosomal subunit protein uL24 (108 aa).

Belongs to the universal ribosomal protein uL24 family. In terms of assembly, part of the 50S ribosomal subunit.

Its function is as follows. One of two assembly initiator proteins, it binds directly to the 5'-end of the 23S rRNA, where it nucleates assembly of the 50S subunit. In terms of biological role, one of the proteins that surrounds the polypeptide exit tunnel on the outside of the subunit. This is Large ribosomal subunit protein uL24 from Mycoplasmopsis synoviae (strain 53) (Mycoplasma synoviae).